The following is a 418-amino-acid chain: MSVAFAAPRQRGKGEITPAAIQKMLDDNNHLIQCIMDSQNKGKTSECSQYQQMLHTNLVYLATIADSNQNMQSLLPAPPTQNMPMGPGGMNQSGPPPPPRSHNMPSDGMVGGGPPAPHMQNQMNGQMPGPNHMPMQGPGPNQLNMTNSSMNMPSSSHGSMGGYNHSVPSSQSMPVQNQMTMSQGQPMGNYGPRPNMSMQPNQGPMMHQQPPSQQYNMPQGGGQHYQGQQPPMGMMGQVNQGNHMMGQRQIPPYRPPQQGPPQQYSGQEDYYGDQYSHGGQGPPEGMNQQYYPDGHNDYGYQQPSYPEQGYDRPYEDSSQHYYEGGNSQYGQQQDAYQGPPPQQGYPPQQQQYPGQQGYPGQQQGYGPSQGGPGPQYPNYPQGQGQQYGGYRPTQPGPPQPPQQRPYGYDQGQYGNYQQ.

Position 2 is an N-acetylserine (serine 2). The interval serine 2–proline 186 is transcriptional activation. The SH2-binding signature appears at tyrosine 50 to methionine 53. Disordered regions lie at residues alanine 77–histidine 118 and glycine 188–glutamine 418. The span at tyrosine 225 to proline 251 shows a compositional bias: low complexity. Over residues glycine 309 to serine 318 the composition is skewed to basic and acidic residues. Composition is skewed to low complexity over residues glutamine 328 to glutamine 337, tyrosine 345 to glycine 366, and tyrosine 376 to threonine 393. 2 consecutive repeat copies span residues glycine 344 to glutamine 356 and glycine 357 to glutamine 369. Residues glycine 344–glutamine 369 form a 2 X 13 AA imperfect tandem repeats region. The short motif at proline 374 to proline 377 is the SH2-binding element. The short motif at proline 392–proline 401 is the SH3-binding element. Over residues glutamine 394–glutamine 403 the composition is skewed to pro residues. Low complexity predominate over residues arginine 404–glutamine 418. The short motif at tyrosine 413–tyrosine 416 is the SH2-binding element.

The protein belongs to the SS18 family. As to quaternary structure, interacts with MLLT10. Isoform 1 interacts with RBM14 isoform 1. Isoform 2 interacts with RBM14 isoform 1. Component of the multiprotein chromatin-remodeling complexes SWI/SNF: SWI/SNF-A (BAF), SWI/SNF-B (PBAF) and related complexes. The canonical complex contains a catalytic subunit (either SMARCA4/BRG1/BAF190A or SMARCA2/BRM/BAF190B) and at least SMARCE1, ACTL6A/BAF53, SMARCC1/BAF155, SMARCC2/BAF170, and SMARCB1/SNF5/BAF47. Other subunits specific to each of the complexes may also be present permitting several possible combinations developmentally and tissue specific. Component of the SWI/SNF (GBAF) subcomplex, which includes at least BICRA or BICRAL (mutually exclusive), BRD9, SS18, the core BAF subunits, SMARCA2/BRM, SMARCA4/BRG1/BAF190A, ACTL6A/BAF53, SMARCC1/BAF155, and SMARCD1/BAF60A. Fairly ubiquitously expressed. Expressed in synovial sarcomas and in other human cell lines. The fusion genes SSXT-SSX1 and SSXT-SSX2 are expressed only in synovial sarcomas.

It localises to the nucleus. Appears to function synergistically with RBM14 as a transcriptional coactivator. Isoform 1 and isoform 2 function in nuclear receptor coactivation. Isoform 1 and isoform 2 function in general transcriptional coactivation. Component of SWI/SNF chromatin remodeling subcomplex GBAF that carries out key enzymatic activities, changing chromatin structure by altering DNA-histone contacts within a nucleosome in an ATP-dependent manner. The sequence is that of Protein SSXT (SS18) from Homo sapiens (Human).